Here is a 497-residue protein sequence, read N- to C-terminus: Probable cytosol aminopeptidase (497 aa).

Residues Lys267 and Asp272 each contribute to the Mn(2+) site. Lys279 is a catalytic residue. Residues Asp290, Asp349, and Glu351 each contribute to the Mn(2+) site. Arg353 is an active-site residue.

Belongs to the peptidase M17 family. Mn(2+) serves as cofactor.

Its subcellular location is the cytoplasm. The enzyme catalyses Release of an N-terminal amino acid, Xaa-|-Yaa-, in which Xaa is preferably Leu, but may be other amino acids including Pro although not Arg or Lys, and Yaa may be Pro. Amino acid amides and methyl esters are also readily hydrolyzed, but rates on arylamides are exceedingly low.. It catalyses the reaction Release of an N-terminal amino acid, preferentially leucine, but not glutamic or aspartic acids.. Its function is as follows. Presumably involved in the processing and regular turnover of intracellular proteins. Catalyzes the removal of unsubstituted N-terminal amino acids from various peptides. The polypeptide is Probable cytosol aminopeptidase (Pseudomonas putida (strain ATCC 47054 / DSM 6125 / CFBP 8728 / NCIMB 11950 / KT2440)).